A 113-amino-acid chain; its full sequence is MGKCSMKKKGVGKNVGVGKKVQKKRSISTAERKRTKLQVEKLNKSSETMIPTLLREASTQEPAKLKAETTLKAEELIKDQEKDSKVREQIRTEKSKTNDSMLKQIEMISGFSL.

Residues 1 to 11 (MGKCSMKKKGV) are compositionally biased toward basic residues. The disordered stretch occupies residues 1 to 35 (MGKCSMKKKGVGKNVGVGKKVQKKRSISTAERKRT).

It belongs to the ADF1 family.

Its subcellular location is the nucleus. Transcriptional repressor which negatively regulates transcription of FYV5 by binding to the promoter on the sense strand. The sequence is that of Antisense of depressing factor protein 1 from Saccharomyces cerevisiae (strain ATCC 204508 / S288c) (Baker's yeast).